Here is a 378-residue protein sequence, read N- to C-terminus: UPF0754 membrane protein BALH_0780 (378 aa).

Transmembrane regions (helical) follow at residues 1–21 and 357–377; these read MNIWLSMLTTTGLGAIIGGFT and YLGALLGGMIGIVQGLLLLFL.

It belongs to the UPF0754 family.

It localises to the cell membrane. In Bacillus thuringiensis (strain Al Hakam), this protein is UPF0754 membrane protein BALH_0780.